Here is a 423-residue protein sequence, read N- to C-terminus: Tyrosine--tRNA ligase (423 aa).

Tyrosine 35 serves as a coordination point for L-tyrosine. The short motif at 40 to 49 (PTAPSLHAGH) is the 'HIGH' region element. L-tyrosine-binding residues include tyrosine 170 and glutamine 174. The 'KMSKS' region signature appears at 230–234 (KFGKS). Residue lysine 233 participates in ATP binding. An S4 RNA-binding domain is found at 355 to 412 (DLITDLLVATGLSASKGAARRTIAEGGVSVNNMKIDSDEWTPQASDFLHGRWLVLRRG).

It belongs to the class-I aminoacyl-tRNA synthetase family. TyrS type 1 subfamily. As to quaternary structure, homodimer.

It is found in the cytoplasm. It catalyses the reaction tRNA(Tyr) + L-tyrosine + ATP = L-tyrosyl-tRNA(Tyr) + AMP + diphosphate + H(+). Its function is as follows. Catalyzes the attachment of tyrosine to tRNA(Tyr) in a two-step reaction: tyrosine is first activated by ATP to form Tyr-AMP and then transferred to the acceptor end of tRNA(Tyr). This Mycobacterium sp. (strain KMS) protein is Tyrosine--tRNA ligase.